The following is a 159-amino-acid chain: MNIDIVCVGKVKERYLRDAIDEYRKRLSRFAKVDVIEVADEKTPEHASDTLNAQIKEKEGERILKHLRDGAFVVALAIEGDQLTSEQLAARIAQWGLHGVSHLQFVIGGSLGLDPRVLRRANMPLSFSKMTFPHQLMRVILLEQIYRAFKINAHEPYHK.

S-adenosyl-L-methionine-binding positions include leucine 76, glycine 108, and 127 to 132; that span reads FSKMTF.

It belongs to the RNA methyltransferase RlmH family. Homodimer.

The protein resides in the cytoplasm. It catalyses the reaction pseudouridine(1915) in 23S rRNA + S-adenosyl-L-methionine = N(3)-methylpseudouridine(1915) in 23S rRNA + S-adenosyl-L-homocysteine + H(+). Functionally, specifically methylates the pseudouridine at position 1915 (m3Psi1915) in 23S rRNA. The protein is Ribosomal RNA large subunit methyltransferase H of Bifidobacterium animalis subsp. lactis (strain AD011).